The primary structure comprises 285 residues: (2Z,6Z)-farnesyl diphosphate synthase CPT6, chloroplastic (285 aa).

A chloroplast-targeting transit peptide spans 1-30 (MNSLFVGRPIVKSSYNVYTLPSSICGGHFF). Asp-65 is an active-site residue.

The protein belongs to the UPP synthase family. Mg(2+) serves as cofactor. In terms of tissue distribution, expressed in roots and red fruits.

It is found in the plastid. The protein localises to the chloroplast. The catalysed reaction is 2 isopentenyl diphosphate + dimethylallyl diphosphate = (2Z,6Z)-farnesyl diphosphate + 2 diphosphate. It carries out the reaction isopentenyl diphosphate + dimethylallyl diphosphate = neryl diphosphate + diphosphate. The enzyme catalyses neryl diphosphate + isopentenyl diphosphate = (2Z,6Z)-farnesyl diphosphate + diphosphate. Uses neryl diphosphate to catalyze the cis-prenyl chain elongation and produce the 15 carbon product (2Z,6Z)-farnesyl diphosphate. This chain is (2Z,6Z)-farnesyl diphosphate synthase CPT6, chloroplastic, found in Solanum lycopersicum (Tomato).